A 102-amino-acid chain; its full sequence is Phosphoribosyl-ATP pyrophosphatase (102 aa).

It belongs to the PRA-PH family.

The protein localises to the cytoplasm. It catalyses the reaction 1-(5-phospho-beta-D-ribosyl)-ATP + H2O = 1-(5-phospho-beta-D-ribosyl)-5'-AMP + diphosphate + H(+). Its pathway is amino-acid biosynthesis; L-histidine biosynthesis; L-histidine from 5-phospho-alpha-D-ribose 1-diphosphate: step 2/9. The polypeptide is Phosphoribosyl-ATP pyrophosphatase (Jannaschia sp. (strain CCS1)).